The sequence spans 75 residues: ATP synthase subunit c (75 aa).

Transmembrane regions (helical) follow at residues 13-33 (LNVV…GILI) and 54-74 (MFLG…LAFI).

Belongs to the ATPase C chain family. F-type ATPases have 2 components, F(1) - the catalytic core - and F(0) - the membrane proton channel. F(1) has five subunits: alpha(3), beta(3), gamma(1), delta(1), epsilon(1). F(0) has three main subunits: a(1), b(2) and c(10-14). The alpha and beta chains form an alternating ring which encloses part of the gamma chain. F(1) is attached to F(0) by a central stalk formed by the gamma and epsilon chains, while a peripheral stalk is formed by the delta and b chains.

Its subcellular location is the cell membrane. Its function is as follows. F(1)F(0) ATP synthase produces ATP from ADP in the presence of a proton or sodium gradient. F-type ATPases consist of two structural domains, F(1) containing the extramembraneous catalytic core and F(0) containing the membrane proton channel, linked together by a central stalk and a peripheral stalk. During catalysis, ATP synthesis in the catalytic domain of F(1) is coupled via a rotary mechanism of the central stalk subunits to proton translocation. In terms of biological role, key component of the F(0) channel; it plays a direct role in translocation across the membrane. A homomeric c-ring of between 10-14 subunits forms the central stalk rotor element with the F(1) delta and epsilon subunits. In Bifidobacterium adolescentis (strain ATCC 15703 / DSM 20083 / NCTC 11814 / E194a), this protein is ATP synthase subunit c.